A 625-amino-acid polypeptide reads, in one-letter code: pH-response transcription factor pacC/RIM101 (625 aa).

Low complexity predominate over residues 1 to 34; the sequence is MSSQDQQQQQQPAQTQTSTSSSSNNENATTATSS. The interval 1-35 is disordered; sequence MSSQDQQQQQQPAQTQTSTSSSSNNENATTATSSI. 3 consecutive C2H2-type zinc fingers follow at residues 45-70, 81-105, and 111-133; these read LLCQ…CEKH, LTCG…IRVH, and HKCE…VKTH. The segment covering 391–416 has biased composition (polar residues); sequence APMTATHSSHSVSSGTPALTPPSSSV. Residues 391 to 440 form a disordered region; the sequence is APMTATHSSHSVSSGTPALTPPSSSVSYTSGNSPMSSSGMSPISRHSSTS. Low complexity predominate over residues 417 to 438; that stretch reads SYTSGNSPMSSSGMSPISRHSS. Residues 444–447 carry the YPX[LI] motif 1 motif; the sequence is YPNL. Disordered stretches follow at residues 455–543 and 584–625; these read SPHH…SPSV and VKDE…DDDE. 2 stretches are compositionally biased toward polar residues: residues 461-472 and 490-514; these read TAPTSTLGTNFD and GLNS…SPKE. The YPX[LI] motif 2 motif lies at 615–618; sequence YPVL.

The protein belongs to the pacC/RIM101 family. Post-translationally, activated by C-terminal proteolytic cleavage by signaling protease (probably palB/RIM13) at neutral to alkaline ambient pH.

It is found in the cytoplasm. The protein localises to the nucleus. In terms of biological role, transcription factor that mediates regulation of both acid- and alkaline-expressed genes in response to ambient pH. At alkaline ambient pH, activates transcription of alkaline-expressed genes (including pac1 itself) and represses transcription of acid-expressed genes. The protein is pH-response transcription factor pacC/RIM101 (pac1) of Sclerotinia sclerotiorum (White mold).